The chain runs to 79 residues: Small ribosomal subunit protein bS16 (79 aa).

Belongs to the bacterial ribosomal protein bS16 family.

This Desulfovibrio desulfuricans (strain ATCC 27774 / DSM 6949 / MB) protein is Small ribosomal subunit protein bS16.